The following is a 236-amino-acid chain: 2-C-methyl-D-erythritol 4-phosphate cytidylyltransferase (236 aa).

The protein belongs to the IspD/TarI cytidylyltransferase family. IspD subfamily.

The catalysed reaction is 2-C-methyl-D-erythritol 4-phosphate + CTP + H(+) = 4-CDP-2-C-methyl-D-erythritol + diphosphate. Its pathway is isoprenoid biosynthesis; isopentenyl diphosphate biosynthesis via DXP pathway; isopentenyl diphosphate from 1-deoxy-D-xylulose 5-phosphate: step 2/6. In terms of biological role, catalyzes the formation of 4-diphosphocytidyl-2-C-methyl-D-erythritol from CTP and 2-C-methyl-D-erythritol 4-phosphate (MEP). The protein is 2-C-methyl-D-erythritol 4-phosphate cytidylyltransferase of Burkholderia thailandensis (strain ATCC 700388 / DSM 13276 / CCUG 48851 / CIP 106301 / E264).